The following is a 512-amino-acid chain: Glycosyltransferase sdnJ (512 aa).

The N-terminal stretch at 1–24 is a signal peptide; it reads MHAKRPSVLFFTISDFGYVNVVLA. A glycan (N-linked (GlcNAc...) asparagine) is linked at Asn-207.

Belongs to the UDP-glycosyltransferase family.

The enzyme catalyses sordaricin + GDP-6-deoxy-alpha-D-altrose = 4'-O-demethylsordarin + GDP + H(+). The protein operates within antibiotic biosynthesis. Its function is as follows. Glycosyltransferase; part of the gene cluster that mediates the biosynthesis of sordarin and hypoxysordarin, glycoside antibiotics with a unique tetracyclic diterpene aglycone structure. First, the geranylgeranyl diphosphate synthase sdnC constructs GGDP from farnesyl diphosphate and isopentenyl diphosphate. The diterpene cyclase sdnA then catalyzes the cyclization of GGDP to afford cycloaraneosene. Cycloaraneosene is then hydroxylated four times by the putative cytochrome P450 monooxygenases sdnB, sdnE, sdnF and sdnH to give a hydroxylated cycloaraneosene derivative such as cycloaraneosene-8,9,13,19-tetraol. Although the order of the hydroxylations is unclear, at least C8, C9 and C13 of the cycloaraneosene skeleton are hydroxylated before the sordaricin formation. Dehydration of the 13-hydroxy group of the hydroxylated cycloaraneosene derivative might be catalyzed by an unassigned hypothetical protein such as sdnG and sdnP to construct the cyclopentadiene moiety. The FAD-dependent oxidoreductase sdnN is proposed to catalyze the oxidation at C9 of the hydroxylated cycloaraneosene derivative and also catalyze the Baeyer-Villiger oxidation to give the lactone intermediate. The presumed lactone intermediate would be hydrolyzed to give an acrolein moiety and a carboxylate moiety. Then, [4+2]cycloaddition would occur between the acrolein moiety and the cyclopentadiene moiety to give sordaricin. SdnN might also be involved in the [4+2]cycloaddition after the hypothesized oxidation to accommodate the oxidized product and prompt the [4+2]cycloaddition. GDP-6-deoxy-D-altrose may be biosynthesized from GDP-D-mannose by the putative GDP-mannose-4,6-dehydratase sdnI and the short-chain dehydrogenase sdnK. The glycosyltransferase sdnJ catalyzes the attachment of 6-deoxy-D-altrose onto the 19-hydroxy group of sordaricin to give 4'-O-demethylsordarin. The methyltransferase sdnD would complete the biosynthesis of sordarin. Sordarin can be further modified into hypoxysordarin. The unique acyl chain at the 3'-hydroxy group of hypoxysordarin would be constructed by an iterative type I PKS sdnO and the trans-acting polyketide methyltransferase sdnL. SdnL would be responsible for the introduction of an alpha-methyl group of the polyketide chain. Alternatively, the beta-lactamase-like protein sdnR might be responsible for the cleavage and transfer of the polyketide chain from the PKS sdnO to sordarin. Two putative cytochrome P450 monooxygenases, sdnQ and sdnT, might catalyze the epoxidations of the polyketide chain to complete the biosynthesis of hypoxysordarin. Transcriptional regulators sdnM and sdnS are presumably encoded for the transcriptional regulation of the expression of the sdn gene cluster. The chain is Glycosyltransferase sdnJ from Sordaria araneosa (Pleurage araneosa).